We begin with the raw amino-acid sequence, 360 residues long: Ferredoxin--NADP reductase 1 (360 aa).

The FAD site is built by aspartate 43, glutamine 51, tyrosine 56, alanine 96, phenylalanine 141, aspartate 307, and serine 348.

It belongs to the ferredoxin--NADP reductase type 2 family. As to quaternary structure, homodimer. The cofactor is FAD.

The enzyme catalyses 2 reduced [2Fe-2S]-[ferredoxin] + NADP(+) + H(+) = 2 oxidized [2Fe-2S]-[ferredoxin] + NADPH. The chain is Ferredoxin--NADP reductase 1 from Cupriavidus taiwanensis (strain DSM 17343 / BCRC 17206 / CCUG 44338 / CIP 107171 / LMG 19424 / R1) (Ralstonia taiwanensis (strain LMG 19424)).